The sequence spans 359 residues: N-acetyl-gamma-glutamyl-phosphate reductase (359 aa).

Residue Cys162 is part of the active site.

This sequence belongs to the NAGSA dehydrogenase family. Type 1 subfamily.

The protein resides in the cytoplasm. It catalyses the reaction N-acetyl-L-glutamate 5-semialdehyde + phosphate + NADP(+) = N-acetyl-L-glutamyl 5-phosphate + NADPH + H(+). It functions in the pathway amino-acid biosynthesis; L-arginine biosynthesis; N(2)-acetyl-L-ornithine from L-glutamate: step 3/4. Functionally, catalyzes the NADPH-dependent reduction of N-acetyl-5-glutamyl phosphate to yield N-acetyl-L-glutamate 5-semialdehyde. In Prochlorococcus marinus (strain MIT 9211), this protein is N-acetyl-gamma-glutamyl-phosphate reductase.